The chain runs to 309 residues: Pyridoxal kinase (309 aa).

Position 2 is an N-acetylthreonine; in Pyridoxal kinase, N-terminally processed (T2). Residues S23 and T58 each coordinate pyridoxal. T58 serves as a coordination point for pyridoxal 5'-phosphate. D124 provides a ligand contact to ATP. A Na(+)-binding site is contributed by D124. D129 contributes to the Mg(2+) binding site. Position 155 (T155) interacts with Na(+). Residues 157-160, 193-194, 225-227, and T232 contribute to the ATP site; these read NQFE, TS, and IPA. T193 is a Na(+) binding site. 233–234 contacts pyridoxal 5'-phosphate; it reads GD. The active-site Proton acceptor is D234.

Belongs to the pyridoxine kinase family. In terms of assembly, homodimer. Zn(2+) is required as a cofactor. In terms of tissue distribution, expressed ubiquitously in leaves, stems, roots, flowers and siliques. Present in root hairs and other tip-growing cells such as papillar cells on the top of stigma.

It catalyses the reaction pyridoxal + ATP = pyridoxal 5'-phosphate + ADP + H(+). It participates in cofactor metabolism; pyridoxal 5'-phosphate salvage; pyridoxal 5'-phosphate from pyridoxal: step 1/1. In terms of biological role, catalyzes the transfer of a phosphate group from ATP to the 5-hydroxylmethyl group of pyridoxal to form the biologically active pyridoxal phosphate, an active form of vitamin B6. Required for Na(+) and K(+) homeostasis and for salt tolerance. Involved in root hair development, both for initiation and tip growth. This Arabidopsis thaliana (Mouse-ear cress) protein is Pyridoxal kinase.